Reading from the N-terminus, the 160-residue chain is Protransforming growth factor alpha (160 aa).

Residues 1-23 (MVPSAGQFALFALGILLAVCQAL) form the signal peptide. Positions 24-39 (ENSTSALSADPPIAAA) are cleaved as a propeptide — removed in mature form. Topologically, residues 24–98 (ENSTSALSAD…AVVAASQKKQ (75 aa)) are extracellular. The N-linked (GlcNAc...) asparagine glycan is linked to Asn25. The 41-residue stretch at 43–83 (HFNDCPDSHSQFCFHGTCRFLVQEDKPACVCHSGYVGARCE) folds into the EGF-like domain. Cystine bridges form between Cys47–Cys60, Cys55–Cys71, and Cys73–Cys82. A propeptide spans 90 to 160 (VVAASQKKQA…TACCHSETVV (71 aa)) (removed in mature form). Residues 99–124 (AITALVVVSIVALAVLIITCVLIHCC) traverse the membrane as a helical segment. The Cytoplasmic portion of the chain corresponds to 125 to 160 (QVRKHCEWCRALICRHEKPSALLKGRTACCHSETVV). S-palmitoyl cysteine attachment occurs at residues Cys153 and Cys154.

Interacts with the PDZ domains of MAGI3, SDCBP and SNTA1. The interaction with SDCBP, is required for the targeting to the cell surface. In the endoplasmic reticulum, in its immature form (i.e. with a prosegment and lacking full N-glycosylation), interacts with CNIH. In the Golgi apparatus, may form a complex with CNIH and GORASP2. Interacts (via cytoplasmic C-terminal domain) with NKD2.

The protein localises to the secreted. Its subcellular location is the extracellular space. The protein resides in the cell membrane. In terms of biological role, TGF alpha is a mitogenic polypeptide that is able to bind to the EGF receptor/EGFR and to act synergistically with TGF beta to promote anchorage-independent cell proliferation in soft agar. The polypeptide is Protransforming growth factor alpha (TGFA) (Sus scrofa (Pig)).